The sequence spans 61 residues: Small ribosomal subunit protein uS14 (61 aa).

4 residues coordinate Zn(2+): cysteine 24, cysteine 27, cysteine 40, and cysteine 43.

This sequence belongs to the universal ribosomal protein uS14 family. Zinc-binding uS14 subfamily. In terms of assembly, part of the 30S ribosomal subunit. Contacts proteins S3 and S10. Zn(2+) serves as cofactor.

Binds 16S rRNA, required for the assembly of 30S particles and may also be responsible for determining the conformation of the 16S rRNA at the A site. The protein is Small ribosomal subunit protein uS14 of Clostridium acetobutylicum (strain ATCC 824 / DSM 792 / JCM 1419 / IAM 19013 / LMG 5710 / NBRC 13948 / NRRL B-527 / VKM B-1787 / 2291 / W).